A 504-amino-acid chain; its full sequence is Hexokinase-10 (504 aa).

Residues 7-29 traverse the membrane as a helical segment; sequence GWVRVAAVGWAVAACAVAAGMVA. The Hexokinase domain maps to 39 to 493; the sequence is NRAVAVVRDL…SGTGAALLAA (455 aa). A hexokinase small subdomain region spans residues 94–226; it reads DGSEEGISYA…GLNMKVNVLV (133 aa). Residues G108 and T109 each coordinate ADP. Positions 192, 193, 227, 254, 282, and 313 each coordinate D-glucose. The hexokinase large subdomain stretch occupies residues 227-482; it reads NNTVGTLALG…ATVSLRVMEE (256 aa). ADP is bound at residue G447.

It belongs to the hexokinase family. Expressed specifically in stamen.

The protein localises to the plastid. The protein resides in the chloroplast outer membrane. It carries out the reaction a D-hexose + ATP = a D-hexose 6-phosphate + ADP + H(+). It catalyses the reaction D-fructose + ATP = D-fructose 6-phosphate + ADP + H(+). The catalysed reaction is D-glucose + ATP = D-glucose 6-phosphate + ADP + H(+). The protein operates within carbohydrate metabolism; hexose metabolism. It functions in the pathway carbohydrate degradation; glycolysis; D-glyceraldehyde 3-phosphate and glycerone phosphate from D-glucose: step 1/4. Fructose and glucose phosphorylating enzyme. The chain is Hexokinase-10 (HXK10) from Oryza sativa subsp. japonica (Rice).